A 356-amino-acid polypeptide reads, in one-letter code: Viral cathepsin (356 aa).

Residues 1 to 40 form the signal peptide; it reads MYANALVCLNPSFIKLQFHIVCTMNIIGIVTLALCSAASA. Residues 41 to 144 constitute a propeptide, activation peptide; the sequence is ADEGAAYNLQ…IILNQPPDKG (104 aa). 3 disulfides stabilise this stretch: C165/C206, C199/C239, and C295/C343. C168 is a catalytic residue. Residues H302 and N322 contribute to the active site.

This sequence belongs to the peptidase C1 family. Synthesized as an inactive proenzyme and activated by proteolytic removal of the inhibitory propeptide.

It catalyses the reaction Endopeptidase of broad specificity, hydrolyzing substrates of both cathepsin L and cathepsin B.. Cysteine protease that plays an essential role in host liquefaction to facilitate horizontal transmission of the virus. May participate in the degradation of foreign protein expressed by the baculovirus system. The chain is Viral cathepsin (VCATH) from Lepidoptera (butterflies and moths).